The chain runs to 194 residues: CASP-like protein 2C2 (194 aa).

Topologically, residues 1-27 (MAAGQPRPPPPPSSVRTERVLRAACAA) are cytoplasmic. The helical transmembrane segment at 28-48 (MAAAGALLLGFSAETKTVIFV) threads the bilayer. Residues 49–58 (QKKAVPKDVQ) are Extracellular-facing. Residues 59–79 (ALWVLIVAAAAAAAYHAAQLA) traverse the membrane as a helical segment. Residues 80–113 (RCLCMDRLAGGGGGCRRLRRAVACATFLLDKGCA) are Cytoplasmic-facing. The helical transmembrane segment at 114–134 (YMVLATTVAALQACFVGLLGV) threads the bilayer. Residues 135 to 152 (EALQWSKLCNIYTRFCEQ) are Extracellular-facing. Residues 153 to 173 (AAAGMVCSLVAAAGMAVLSAF) form a helical membrane-spanning segment. At 174–194 (SARDLFRRRRPCSPCVQVQQV) the chain is on the cytoplasmic side.

It belongs to the Casparian strip membrane proteins (CASP) family. In terms of assembly, homodimer and heterodimers.

It is found in the cell membrane. In Sorghum bicolor (Sorghum), this protein is CASP-like protein 2C2.